The sequence spans 118 residues: UPF0102 protein Dtur_1530 (118 aa).

It belongs to the UPF0102 family.

The protein is UPF0102 protein Dtur_1530 of Dictyoglomus turgidum (strain DSM 6724 / Z-1310).